The sequence spans 287 residues: Cyclopropane mycolic acid synthase MmaA2 (287 aa).

Residues 33-34 (YS), 72-74 (GCG), 94-99 (TLSKNQ), 123-124 (WE), and I136 contribute to the S-adenosyl-L-methionine site. Residue C269 is part of the active site.

Belongs to the CFA/CMAS family.

It carries out the reaction a 1-acyl-2-(9Z)-enoyl-sn-glycero-3-phospholipid + S-adenosyl-L-methionine = a 1-acyl-2-(9-cyclopronane)-acyl-sn-glycero-3-phospholipid + S-adenosyl-L-homocysteine + H(+). It participates in lipid metabolism; mycolic acid biosynthesis. Functionally, catalyzes the conversion of a double bond to a cis cyclopropane ring at the distal position of an alpha mycolic acid via the transfer of a methylene group from S-adenosyl-L-methionine. MmaA2 also catalyzes the biosynthesis of the cis-cyclopropanated methoxymycolates. Cyclopropanated mycolic acids are key factors participating in cell envelope permeability, host immunomodulation and persistence. This is Cyclopropane mycolic acid synthase MmaA2 (mmaA2) from Mycobacterium tuberculosis (strain ATCC 25177 / H37Ra).